The primary structure comprises 74 residues: Ubiquitin-like protein FUBI (74 aa).

It belongs to the ubiquitin family.

The chain is Ubiquitin-like protein FUBI (FAU) from Pongo abelii (Sumatran orangutan).